A 571-amino-acid polypeptide reads, in one-letter code: Urease subunit alpha (571 aa).

A Urease domain is found at 132-571 (GAIDTHIHFI…LPMGQKYFLF (440 aa)). Ni(2+)-binding residues include His-137, His-139, and Lys-220. N6-carboxylysine is present on Lys-220. Position 222 (His-222) interacts with substrate. Residues His-249 and His-275 each contribute to the Ni(2+) site. Catalysis depends on His-323, which acts as the Proton donor. A Ni(2+)-binding site is contributed by Asp-363.

The protein belongs to the metallo-dependent hydrolases superfamily. Urease alpha subunit family. Heterotrimer of UreA (gamma), UreB (beta) and UreC (alpha) subunits. Three heterotrimers associate to form the active enzyme. Ni cation serves as cofactor. In terms of processing, carboxylation allows a single lysine to coordinate two nickel ions.

It localises to the cytoplasm. The catalysed reaction is urea + 2 H2O + H(+) = hydrogencarbonate + 2 NH4(+). The protein operates within nitrogen metabolism; urea degradation; CO(2) and NH(3) from urea (urease route): step 1/1. This Corynebacterium urealyticum (strain ATCC 43042 / DSM 7109) protein is Urease subunit alpha.